The chain runs to 146 residues: Hemoglobin subunit beta-2 (146 aa).

Val-1 carries the post-translational modification N-acetylvaline. One can recognise a Globin domain in the interval 2-146 (HLHGDEKAAV…VASALAHKYH (145 aa)). Lys-17 is subject to N6-succinyllysine. Residue Ser-44 is modified to Phosphoserine. At Lys-59 the chain carries N6-succinyllysine. Heme b is bound by residues His-63 and His-92. Residue Arg-104 is modified to Asymmetric dimethylarginine. At Thr-123 the chain carries Phosphothreonine.

It belongs to the globin family. Heterotetramer of two alpha chains and two beta chains. As to expression, red blood cells.

In terms of biological role, involved in oxygen transport from the lung to the various peripheral tissues. In Tapirus terrestris (Lowland tapir), this protein is Hemoglobin subunit beta-2 (HBB2).